We begin with the raw amino-acid sequence, 569 residues long: 2-isopropylmalate synthase (569 aa).

One can recognise a Pyruvate carboxyltransferase domain in the interval 31 to 305 (PRWMSTDLRD…APELDFSDID (275 aa)). Mg(2+) contacts are provided by Asp40, His244, His246, and Asn280. Positions 437–569 (RETPLRYVSH…TASASAATEA (133 aa)) are regulatory domain.

This sequence belongs to the alpha-IPM synthase/homocitrate synthase family. LeuA type 2 subfamily. Homodimer. It depends on Mg(2+) as a cofactor.

It localises to the cytoplasm. The enzyme catalyses 3-methyl-2-oxobutanoate + acetyl-CoA + H2O = (2S)-2-isopropylmalate + CoA + H(+). It participates in amino-acid biosynthesis; L-leucine biosynthesis; L-leucine from 3-methyl-2-oxobutanoate: step 1/4. Functionally, catalyzes the condensation of the acetyl group of acetyl-CoA with 3-methyl-2-oxobutanoate (2-ketoisovalerate) to form 3-carboxy-3-hydroxy-4-methylpentanoate (2-isopropylmalate). In Cupriavidus taiwanensis (strain DSM 17343 / BCRC 17206 / CCUG 44338 / CIP 107171 / LMG 19424 / R1) (Ralstonia taiwanensis (strain LMG 19424)), this protein is 2-isopropylmalate synthase.